Consider the following 495-residue polypeptide: MRGDSFIWSLATAIPLLSTAVESLKVVKRDNPSVLGFDIERFQAAKPVHRDIIAKRASTKTISQDLDNQKNLYFCNLTLGTPPQTIRAHIDTGSSDLWVNTAESRFCSSRRAPCSQGGTYDSSSSSTYQLVNNDFNISYVDGSGATGDYVTDVINVGGIKLKDFQFAIGHTSSSPLGVLGIGYEAGEAQVTRSGDQSYPNLPAALVKAGHIRSNAYSLWLNDLSASRGQILFGGIDTGKFQGKLQTVPVLHTSRGDYTSLVVALTGVGIRTGSDGSIDTFPSQPVAVAMDSGSSLSYLPDALAAKVYNSVDAVFDPANNLAFVPCSMANDKRKLVFTFSSPQIAVGMDELVIDLGPDANGNEATFRDGSKACVFGIAPAGSSISILGDTVLRSAYLVYDLDNNEISIAPTRFNSTETNIMEIGTGENSVPDATGVPNAVTSAQVTQATGLPGVETGVPGSRPPSSKAAGQAKRPDFVLGVAAVGLAGAGMLFAAM.

The signal sequence occupies residues 1–19 (MRGDSFIWSLATAIPLLST). The Peptidase A1 domain maps to 73–408 (YFCNLTLGTP…DLDNNEISIA (336 aa)). Asn-76 is a glycosylation site (N-linked (GlcNAc...) asparagine). Asp-91 is a catalytic residue. Asn-136 is a glycosylation site (N-linked (GlcNAc...) asparagine). Asp-290 is a catalytic residue. Asn-413 carries N-linked (GlcNAc...) asparagine glycosylation. A disordered region spans residues 448 to 470 (TGLPGVETGVPGSRPPSSKAAGQ). Residue Ala-467 is the site of GPI-anchor amidated alanine attachment. The propeptide at 468-495 (AGQAKRPDFVLGVAAVGLAGAGMLFAAM) is removed in mature form.

It belongs to the peptidase A1 family.

The protein resides in the cell membrane. Probable GPI-anchored aspartic-type endopeptidase which contributes to virulence. The sequence is that of Probable aspartic-type endopeptidase OPSB (OPSB) from Trichophyton verrucosum (strain HKI 0517).